The chain runs to 204 residues: Casparian strip membrane protein 2 (204 aa).

Residues 1–42 (MKNESTTIDVPAESSSAMKGKAPLIGVARDHTTSGSGGYNRG) are Cytoplasmic-facing. Residues 43–63 (LSIFDFLLRLAAIVAALAAAA) traverse the membrane as a helical segment. Topologically, residues 64 to 92 (TMGTSDETLPFFTQFLQFEASYDDLPTFQ) are extracellular. Residues 93–113 (FFVIAMALVGGYLVLSLPISV) form a helical membrane-spanning segment. The Cytoplasmic portion of the chain corresponds to 114–125 (VTILRPLATAPR). The helical transmembrane segment at 126 to 146 (LLLLVLDTAVLALNTAAASSA) threads the bilayer. The Extracellular portion of the chain corresponds to 147 to 178 (AAISYLAHSGNQNTNWLPICQQFGDFCQKSSG). Residues 179 to 199 (AVVSAFISVVFFTILVVISGV) traverse the membrane as a helical segment. Residues 200–204 (ALKRH) lie on the Cytoplasmic side of the membrane.

Belongs to the Casparian strip membrane proteins (CASP) family. Homodimer and heterodimers.

The protein localises to the cell membrane. Its function is as follows. Regulates membrane-cell wall junctions and localized cell wall deposition. Required for establishment of the Casparian strip membrane domain (CSD) and the subsequent formation of Casparian strips, a cell wall modification of the root endodermis that determines an apoplastic barrier between the intraorganismal apoplasm and the extraorganismal apoplasm and prevents lateral diffusion. In Arabidopsis lyrata subsp. lyrata (Lyre-leaved rock-cress), this protein is Casparian strip membrane protein 2.